We begin with the raw amino-acid sequence, 223 residues long: UPF0502 protein Sde_2426 (223 aa).

It belongs to the UPF0502 family.

In Saccharophagus degradans (strain 2-40 / ATCC 43961 / DSM 17024), this protein is UPF0502 protein Sde_2426.